Consider the following 260-residue polypeptide: UPF0294 protein plu0699 (260 aa).

It belongs to the UPF0294 family.

It localises to the cytoplasm. The chain is UPF0294 protein plu0699 from Photorhabdus laumondii subsp. laumondii (strain DSM 15139 / CIP 105565 / TT01) (Photorhabdus luminescens subsp. laumondii).